Here is a 373-residue protein sequence, read N- to C-terminus: Dual-specificity RNA methyltransferase RlmN (373 aa).

Glu-94 functions as the Proton acceptor in the catalytic mechanism. The Radical SAM core domain occupies 100 to 339; sequence EDDRATLCVS…VIVRKTRGDD (240 aa). Cysteines 107 and 344 form a disulfide. Residues Cys-114, Cys-118, and Cys-121 each coordinate [4Fe-4S] cluster. S-adenosyl-L-methionine is bound by residues 168 to 169, Ser-200, 222 to 224, and Asn-301; these read GE and SIH. Cys-344 functions as the S-methylcysteine intermediate in the catalytic mechanism.

It belongs to the radical SAM superfamily. RlmN family. [4Fe-4S] cluster serves as cofactor.

It localises to the cytoplasm. It carries out the reaction adenosine(2503) in 23S rRNA + 2 reduced [2Fe-2S]-[ferredoxin] + 2 S-adenosyl-L-methionine = 2-methyladenosine(2503) in 23S rRNA + 5'-deoxyadenosine + L-methionine + 2 oxidized [2Fe-2S]-[ferredoxin] + S-adenosyl-L-homocysteine. The catalysed reaction is adenosine(37) in tRNA + 2 reduced [2Fe-2S]-[ferredoxin] + 2 S-adenosyl-L-methionine = 2-methyladenosine(37) in tRNA + 5'-deoxyadenosine + L-methionine + 2 oxidized [2Fe-2S]-[ferredoxin] + S-adenosyl-L-homocysteine. In terms of biological role, specifically methylates position 2 of adenine 2503 in 23S rRNA and position 2 of adenine 37 in tRNAs. m2A2503 modification seems to play a crucial role in the proofreading step occurring at the peptidyl transferase center and thus would serve to optimize ribosomal fidelity. This chain is Dual-specificity RNA methyltransferase RlmN, found in Shewanella pealeana (strain ATCC 700345 / ANG-SQ1).